The chain runs to 431 residues: Enolase (431 aa).

Q167 contacts (2R)-2-phosphoglycerate. Residue E209 is the Proton donor of the active site. Mg(2+) is bound by residues D246, E290, and D317. Positions 342, 371, 372, and 393 each coordinate (2R)-2-phosphoglycerate. K342 (proton acceptor) is an active-site residue.

It belongs to the enolase family. In terms of assembly, component of the RNA degradosome, a multiprotein complex involved in RNA processing and mRNA degradation. The cofactor is Mg(2+).

It localises to the cytoplasm. The protein resides in the secreted. Its subcellular location is the cell surface. The enzyme catalyses (2R)-2-phosphoglycerate = phosphoenolpyruvate + H2O. It functions in the pathway carbohydrate degradation; glycolysis; pyruvate from D-glyceraldehyde 3-phosphate: step 4/5. Its function is as follows. Catalyzes the reversible conversion of 2-phosphoglycerate (2-PG) into phosphoenolpyruvate (PEP). It is essential for the degradation of carbohydrates via glycolysis. In Yersinia pseudotuberculosis serotype O:1b (strain IP 31758), this protein is Enolase.